Here is a 488-residue protein sequence, read N- to C-terminus: Malonate-semialdehyde dehydrogenase (488 aa).

The NAD(+) site is built by Ala-150, Phe-152, Lys-176, Glu-179, Arg-180, Ser-229, and Thr-251. The active-site Nucleophile is the Cys-284. Residue Glu-382 participates in NAD(+) binding.

Belongs to the aldehyde dehydrogenase family. IolA subfamily. As to quaternary structure, homotetramer.

It carries out the reaction 3-oxopropanoate + NAD(+) + CoA + H2O = hydrogencarbonate + acetyl-CoA + NADH + H(+). The catalysed reaction is 2-methyl-3-oxopropanoate + NAD(+) + CoA + H2O = propanoyl-CoA + hydrogencarbonate + NADH + H(+). The protein operates within polyol metabolism; myo-inositol degradation into acetyl-CoA; acetyl-CoA from myo-inositol: step 7/7. Its function is as follows. Catalyzes the oxidation of malonate semialdehyde (MSA) and methylmalonate semialdehyde (MMSA) into acetyl-CoA and propanoyl-CoA, respectively. Is involved in a myo-inositol catabolic pathway. Bicarbonate, and not CO2, is the end-product of the enzymatic reaction. The chain is Malonate-semialdehyde dehydrogenase from Listeria monocytogenes serotype 4b (strain CLIP80459).